A 353-amino-acid polypeptide reads, in one-letter code: WD repeat-containing protein 55 (353 aa).

WD repeat units follow at residues 4-43 (DLGA…SLVR), 49-88 (AHKE…QVAH), 92-130 (AHED…CSHE), 133-172 (AHED…VQSQ), 175-214 (FSED…DCSD), 218-257 (DLAP…IIQP), and 260-299 (SHDY…EGSN). The disordered stretch occupies residues 300–353 (VNSGNASGAAEDSDSDNDGMDLDNDPSKSSKGSKRKTKSKANTLNATNNFFADL). The span at 310–323 (EDSDSDNDGMDLDN) shows a compositional bias: acidic residues. Residues 339–353 (KANTLNATNNFFADL) are compositionally biased toward low complexity.

Belongs to the WD repeat WDR55 family. In terms of assembly, interacts with DDB1A. Highly expressed in roots. Expressed in cotyledons, leaves, buds and flowers.

Its subcellular location is the nucleus. The protein resides in the cytoplasm. In terms of biological role, required for male and female gametogenesis, seed development, and embryo and endosperm development at early stages. Involved in the establishment of bilateral symmetry in the transition from the globular to the heart embryo stage. May act in the frame of a CRL4 complex. Required for proper vegetative growth and organization of the adult plant body. May play a role in hormonal control of plant development. In Arabidopsis thaliana (Mouse-ear cress), this protein is WD repeat-containing protein 55.